The sequence spans 313 residues: Protein FixB (313 aa).

An FAD-binding site is contributed by 255-283 (LYLAVGISGQIQHMVGANASQTIFAINKD).

This sequence belongs to the ETF alpha-subunit/FixB family. As to quaternary structure, heterodimer of FixA and FixB.

It participates in amine and polyamine metabolism; carnitine metabolism. Functionally, required for anaerobic carnitine reduction. May bring reductant to CaiA. The protein is Protein FixB of Escherichia coli O139:H28 (strain E24377A / ETEC).